The chain runs to 653 residues: ATP-dependent zinc metalloprotease FtsH 1 (653 aa).

Residues 1-7 lie on the Cytoplasmic side of the membrane; the sequence is MSRFFKS. A helical transmembrane segment spans residues 8–28; that stretch reads AAFPILIVVVLAFFAQRLINP. Over 29-105 the chain is Extracellular; the sequence is GDSGPRYDYS…FDIEGTKSNG (77 aa). The chain crosses the membrane as a helical span at residues 106 to 126; the sequence is WLSLLTYVLPFLIFIGFWIFL. The Cytoplasmic segment spans residues 127 to 653; that stretch reads MNQVQGGGSK…MHFPERPELA (527 aa). An ATP-binding site is contributed by 198 to 205; sequence GPPGTGKT. Residue histidine 420 coordinates Zn(2+). Glutamate 421 is an active-site residue. The Zn(2+) site is built by histidine 424 and aspartate 496. The segment at 603–653 is disordered; it reads EEVFGAEASPPPDVPLPPATERGRDTPRPLPRPGLAGGAAEMHFPERPELA. Positions 611 to 620 are enriched in pro residues; sequence SPPPDVPLPP.

In the central section; belongs to the AAA ATPase family. It in the C-terminal section; belongs to the peptidase M41 family. In terms of assembly, homohexamer. Zn(2+) is required as a cofactor.

The protein resides in the cell membrane. Its function is as follows. Acts as a processive, ATP-dependent zinc metallopeptidase for both cytoplasmic and membrane proteins. Plays a role in the quality control of integral membrane proteins. The sequence is that of ATP-dependent zinc metalloprotease FtsH 1 from Conexibacter woesei (strain DSM 14684 / CCUG 47730 / CIP 108061 / JCM 11494 / NBRC 100937 / ID131577).